A 121-amino-acid polypeptide reads, in one-letter code: Small ribosomal subunit protein uS13 (121 aa).

The interval 90–121 (RHRRGLPVRGQHTKNNARTRKGKKVSIAGRKK) is disordered.

It belongs to the universal ribosomal protein uS13 family. Part of the 30S ribosomal subunit. Forms a loose heterodimer with protein S19. Forms two bridges to the 50S subunit in the 70S ribosome.

Its function is as follows. Located at the top of the head of the 30S subunit, it contacts several helices of the 16S rRNA. In the 70S ribosome it contacts the 23S rRNA (bridge B1a) and protein L5 of the 50S subunit (bridge B1b), connecting the 2 subunits; these bridges are implicated in subunit movement. Contacts the tRNAs in the A and P-sites. The polypeptide is Small ribosomal subunit protein uS13 (Lactiplantibacillus plantarum (strain ATCC BAA-793 / NCIMB 8826 / WCFS1) (Lactobacillus plantarum)).